The following is a 149-amino-acid chain: Large ribosomal subunit protein bL9 (149 aa).

It belongs to the bacterial ribosomal protein bL9 family.

Its function is as follows. Binds to the 23S rRNA. This is Large ribosomal subunit protein bL9 from Xylella fastidiosa (strain M23).